We begin with the raw amino-acid sequence, 429 residues long: Tol-Pal system protein TolB (429 aa).

Positions 1-28 are cleaved as a signal peptide; that stretch reads MSITPSFSRRSVVSLLAAGAFSSMSAFA.

This sequence belongs to the TolB family. The Tol-Pal system is composed of five core proteins: the inner membrane proteins TolA, TolQ and TolR, the periplasmic protein TolB and the outer membrane protein Pal. They form a network linking the inner and outer membranes and the peptidoglycan layer.

Its subcellular location is the periplasm. Part of the Tol-Pal system, which plays a role in outer membrane invagination during cell division and is important for maintaining outer membrane integrity. In Polaromonas naphthalenivorans (strain CJ2), this protein is Tol-Pal system protein TolB.